The chain runs to 680 residues: Dihydroxyacetone phosphate acyltransferase (680 aa).

Phosphoserine occurs at positions 12 and 17. The HXXXXD motif signature appears at 162–167; it reads HRSYID. Residue K643 is modified to N6-acetyllysine. The Microbody targeting signal motif lies at 678–680; the sequence is AKL.

Belongs to the GPAT/DAPAT family. In terms of assembly, part of a heterotrimeric complex composed of GNPAT, AGPS and a modified form of GNPAT.

The protein localises to the peroxisome membrane. It catalyses the reaction dihydroxyacetone phosphate + an acyl-CoA = a 1-acylglycerone 3-phosphate + CoA. The catalysed reaction is dihydroxyacetone phosphate + hexadecanoyl-CoA = 1-hexadecanoylglycerone 3-phosphate + CoA. It functions in the pathway membrane lipid metabolism; glycerophospholipid metabolism. Functionally, dihydroxyacetonephosphate acyltransferase catalyzing the first step in the biosynthesis of plasmalogens, a subset of phospholipids that differ from other glycerolipids by having an alkyl chain attached through a vinyl ether linkage at the sn-1 position of the glycerol backbone, and which unique physical properties have an impact on various aspects of cell signaling and membrane biology. The chain is Dihydroxyacetone phosphate acyltransferase from Homo sapiens (Human).